A 308-amino-acid chain; its full sequence is Ribosomal RNA small subunit methyltransferase H (308 aa).

S-adenosyl-L-methionine contacts are provided by residues 36–38 (GGH), D55, F82, D103, and Q110.

The protein belongs to the methyltransferase superfamily. RsmH family.

It is found in the cytoplasm. It carries out the reaction cytidine(1402) in 16S rRNA + S-adenosyl-L-methionine = N(4)-methylcytidine(1402) in 16S rRNA + S-adenosyl-L-homocysteine + H(+). Its function is as follows. Specifically methylates the N4 position of cytidine in position 1402 (C1402) of 16S rRNA. The protein is Ribosomal RNA small subunit methyltransferase H of Helicobacter pylori (strain ATCC 700392 / 26695) (Campylobacter pylori).